The primary structure comprises 777 residues: MGRGSGTFERLLDKATSQLLLETDWESILQICDLIRQGDTQAKYAVNSIKKKVNDKNPHVALYALEVMESVVKNCGQTVHDEVANKQTMEELKDLLKRQVEVNVRNKILYLIQAWAHAFRNEPKYKVVQDTYQIMKVEGHVFPEFKESDAMFAAERAPDWVDAEECHRCRVQFGVMTRKHHCRACGQIFCGKCSSKYSTIPKFGIEKEVRVCEPCYEQLNRKAEGKATSTTELPPEYLTSPLSQQSQLPPKRDETALQEEEELQLALALSQSEAEEKERLRQKSTYTSYPKAEPMPSASSAPPASSLYSSPVNSSAPLAEDIDPELARYLNRNYWEKKQEEARKSPTPSAPVPLTEPAAQPGEGHAAPTNVVENPLPETDSQPIPPSGGPFSEPQFHNGESEESHEQFLKALQNAVTTFVNRMKSNHMRGRSITNDSAVLSLFQSINGMHPQLLELLNQLDERRLYYEGLQDKLAQIRDARGALSALREEHREKLRRAAEEAERQRQIQLAQKLEIMRQKKQEYLEVQRQLAIQRLQEQEKERQMRLEQQKQTVQMRAQMPAFPLPYAQLQAMPAAGGVLYQPSGPASFPSTFSPAGSVEGSPMHGVYMSQPAPAAGPYPSMPSTAADPSMVSAYMYPAGATGAQAAPQAQAGPTASPAYSSYQPTPTAGYQNVASQAPQSLPAISQPPQSSTMGYMGSQSVSMGYQPYNMQNLMTTLPSQDASLPPQQPYIAGQQPMYQQMAPSGGPPQQQPPVAQQPQAQGPPAQGSEAQLISFD.

The VHS domain maps to 15 to 143 (ATSQLLLETD…IMKVEGHVFP (129 aa)). An FYVE-type zinc finger spans residues 160–220 (WVDAEECHRC…VCEPCYEQLN (61 aa)). Zn(2+) is bound by residues Cys-166, Cys-169, Cys-182, Cys-185, Cys-190, and Cys-193. Lys-207 is modified (N6-acetyllysine). Residues Cys-212 and Cys-215 each coordinate Zn(2+). Tyr-216 is modified (phosphotyrosine). The interval 223–319 (AEGKATSTTE…SPVNSSAPLA (97 aa)) is disordered. Positions 225 to 543 (GKATSTTELP…QRLQEQEKER (319 aa)) are interaction with SNX1. Positions 258–277 (QEEEELQLALALSQSEAEEK) constitute a UIM domain. Over residues 290–311 (PKAEPMPSASSAPPASSLYSSP) the composition is skewed to low complexity. Phosphotyrosine occurs at positions 308, 329, and 334. The tract at residues 338–407 (KQEEARKSPT…NGESEESHEQ (70 aa)) is disordered. The tract at residues 445–543 (SINGMHPQLL…QRLQEQEKER (99 aa)) is interaction with SNAP25 and TRAK2. The interaction with STAM stretch occupies residues 454-572 (LELLNQLDER…FPLPYAQLQA (119 aa)). Positions 480 to 777 (ARGALSALRE…GSEAQLISFD (298 aa)) are interaction with NF2. Lys-551 bears the N6-succinyllysine mark. Residues 718 to 777 (LPSQDASLPPQQPYIAGQQPMYQQMAPSGGPPQQQPPVAQQPQAQGPPAQGSEAQLISFD) are disordered. A compositionally biased stretch (low complexity) spans 753–768 (PPVAQQPQAQGPPAQG).

Component of the ESCRT-0 complex composed of STAM or STAM2 and HGS. Part of a complex at least composed of HSG, STAM2 (or probably STAM) and EPS15. Interacts with STAM. Interacts with STAM2. Interacts with EPS15; the interaction is direct, calcium-dependent and inhibited by SNAP25. Identified in a complex with STAM and LITAF. Found in a complex with STAM and E3 ligase ITCH and DTX3L. Interacts with E3 ligase DTX3L; the interaction brings together STAM and HSG, promotes their recruitment to early endosomes and decreases STAM and HGS ubiquitination by ITCH. Interacts with NF2; the interaction is direct. Interacts with ubiquitin; the interaction is direct. Interacts with VPS37C. Interacts with SMAD1, SMAD2 and SMAD3. Interacts with TSG101; the interaction mediates the association with the ESCRT-I complex. Interacts with SNAP25; the interaction is direct and decreases with addition of increasing concentrations of free calcium. Interacts with SNX1; the interaction is direct. Component of a 550 kDa membrane complex at least composed of HGS and SNX1 but excluding EGFR. Interacts with TRAK1. Interacts with TRAK2. Component of the CART complex, at least composed of ACTN4, HGS/HRS, MYO5B and TRIM3. Interacts (via UIM domain) with UBQLN1 (via ubiquitin-like domain). Interacts with ARRDC3. Identified in a complex containing at least ARRDC4, AVPR2 and HGS. Interacts with LAPTM4B; promotes HGS ubiquitination. Phosphorylated on Tyr-334. A minor site of phosphorylation on Tyr-329 is detected. Phosphorylation occurs in response to EGF, IL-2, GM-CSF and HGF. Post-translationally, ubiquitinated. Ubiquitinated by ITCH. In terms of tissue distribution, ubiquitous expression in adult and fetal tissues with higher expression in testis and peripheral blood leukocytes.

The protein resides in the cytoplasm. The protein localises to the early endosome membrane. It is found in the endosome. Its subcellular location is the multivesicular body membrane. Its function is as follows. Involved in intracellular signal transduction mediated by cytokines and growth factors. When associated with STAM, it suppresses DNA signaling upon stimulation by IL-2 and GM-CSF. Could be a direct effector of PI3-kinase in vesicular pathway via early endosomes and may regulate trafficking to early and late endosomes by recruiting clathrin. May concentrate ubiquitinated receptors within clathrin-coated regions. Involved in down-regulation of receptor tyrosine kinase via multivesicular body (MVBs) when complexed with STAM (ESCRT-0 complex). The ESCRT-0 complex binds ubiquitin and acts as a sorting machinery that recognizes ubiquitinated receptors and transfers them to further sequential lysosomal sorting/trafficking processes. May contribute to the efficient recruitment of SMADs to the activin receptor complex. Involved in receptor recycling via its association with the CART complex, a multiprotein complex required for efficient transferrin receptor recycling but not for EGFR degradation. The protein is Hepatocyte growth factor-regulated tyrosine kinase substrate (HGS) of Homo sapiens (Human).